Reading from the N-terminus, the 146-residue chain is Ribosome-binding factor A (146 aa).

The disordered stretch occupies residues 127 to 146 (EFAGEADPYKKPEDDEAAES).

The protein belongs to the RbfA family. As to quaternary structure, monomer. Binds 30S ribosomal subunits, but not 50S ribosomal subunits or 70S ribosomes.

The protein localises to the cytoplasm. Functionally, one of several proteins that assist in the late maturation steps of the functional core of the 30S ribosomal subunit. Associates with free 30S ribosomal subunits (but not with 30S subunits that are part of 70S ribosomes or polysomes). Required for efficient processing of 16S rRNA. May interact with the 5'-terminal helix region of 16S rRNA. The polypeptide is Ribosome-binding factor A (Renibacterium salmoninarum (strain ATCC 33209 / DSM 20767 / JCM 11484 / NBRC 15589 / NCIMB 2235)).